We begin with the raw amino-acid sequence, 260 residues long: Hydroxyethylthiazole kinase 1 (260 aa).

Position 39 (Met-39) interacts with substrate. ATP contacts are provided by Arg-115 and Thr-160. Substrate is bound at residue Gly-187.

It belongs to the Thz kinase family. It depends on Mg(2+) as a cofactor.

The enzyme catalyses 5-(2-hydroxyethyl)-4-methylthiazole + ATP = 4-methyl-5-(2-phosphooxyethyl)-thiazole + ADP + H(+). It functions in the pathway cofactor biosynthesis; thiamine diphosphate biosynthesis; 4-methyl-5-(2-phosphoethyl)-thiazole from 5-(2-hydroxyethyl)-4-methylthiazole: step 1/1. Its function is as follows. Catalyzes the phosphorylation of the hydroxyl group of 4-methyl-5-beta-hydroxyethylthiazole (THZ). The sequence is that of Hydroxyethylthiazole kinase 1 from Streptococcus pneumoniae (strain JJA).